The primary structure comprises 178 residues: Non-specific lipid transfer protein-like 1 (178 aa).

The N-terminal stretch at 1–26 (MAVAARAAAVACLLVVGLAAVAGVDG) is a signal peptide. Disulfide bonds link Cys50/Cys68 and Cys69/Cys110. A glycan (N-linked (GlcNAc...) asparagine) is linked at Asn99. Ala149 carries GPI-anchor amidated alanine lipidation. Residues 150–178 (AARSPMASTTAVLVVAAAVAAPLLAFFHF) constitute a propeptide, removed in mature form.

Belongs to the plant LTP family. In terms of processing, O-glycosylated on hydroxyprolines; noncontiguous hydroxylproline residues are glycosylated with arabinogalactan. In terms of tissue distribution, expressed in roots, stems, leaves, flowers and seeds.

The protein localises to the vacuole. It is found in the aleurone grain membrane. The polypeptide is Non-specific lipid transfer protein-like 1 (LTPL1) (Oryza sativa subsp. japonica (Rice)).